The following is a 169-amino-acid chain: Crossover junction endodeoxyribonuclease RuvC (169 aa).

Active-site residues include Asp-11, Glu-71, and His-143. Asp-11, Glu-71, and His-143 together coordinate Mg(2+).

This sequence belongs to the RuvC family. In terms of assembly, homodimer which binds Holliday junction (HJ) DNA. The HJ becomes 2-fold symmetrical on binding to RuvC with unstacked arms; it has a different conformation from HJ DNA in complex with RuvA. In the full resolvosome a probable DNA-RuvA(4)-RuvB(12)-RuvC(2) complex forms which resolves the HJ. Mg(2+) serves as cofactor.

Its subcellular location is the cytoplasm. It catalyses the reaction Endonucleolytic cleavage at a junction such as a reciprocal single-stranded crossover between two homologous DNA duplexes (Holliday junction).. Its function is as follows. The RuvA-RuvB-RuvC complex processes Holliday junction (HJ) DNA during genetic recombination and DNA repair. Endonuclease that resolves HJ intermediates. Cleaves cruciform DNA by making single-stranded nicks across the HJ at symmetrical positions within the homologous arms, yielding a 5'-phosphate and a 3'-hydroxyl group; requires a central core of homology in the junction. The consensus cleavage sequence is 5'-(A/T)TT(C/G)-3'. Cleavage occurs on the 3'-side of the TT dinucleotide at the point of strand exchange. HJ branch migration catalyzed by RuvA-RuvB allows RuvC to scan DNA until it finds its consensus sequence, where it cleaves and resolves the cruciform DNA. This Mesorhizobium japonicum (strain LMG 29417 / CECT 9101 / MAFF 303099) (Mesorhizobium loti (strain MAFF 303099)) protein is Crossover junction endodeoxyribonuclease RuvC.